The following is a 171-amino-acid chain: Nicotinamide-nucleotide adenylyltransferase (171 aa).

It belongs to the archaeal NMN adenylyltransferase family.

It localises to the cytoplasm. The catalysed reaction is beta-nicotinamide D-ribonucleotide + ATP + H(+) = diphosphate + NAD(+). Its pathway is cofactor biosynthesis; NAD(+) biosynthesis; NAD(+) from nicotinamide D-ribonucleotide: step 1/1. In Methanococcus maripaludis (strain C6 / ATCC BAA-1332), this protein is Nicotinamide-nucleotide adenylyltransferase.